The chain runs to 534 residues: CTP synthase (534 aa).

The interval 1–267 is amidoligase domain; sequence MSKYIVVTGG…GSYILNRLNI (267 aa). Serine 13 lines the CTP pocket. Position 13 (serine 13) interacts with UTP. 14-19 serves as a coordination point for ATP; it reads SIGKGI. Tyrosine 54 contributes to the L-glutamine binding site. Aspartate 71 is a binding site for ATP. Mg(2+) contacts are provided by aspartate 71 and glutamate 141. CTP is bound by residues 148 to 150, 188 to 193, and lysine 224; these read DIE and KTKPTQ. UTP contacts are provided by residues 188–193 and lysine 224; that span reads KTKPTQ. Residues 294 to 532 enclose the Glutamine amidotransferase type-1 domain; that stretch reads KIAVVGKYIE…IKAAKNKKQN (239 aa). Position 353 (glycine 353) interacts with L-glutamine. The Nucleophile; for glutamine hydrolysis role is filled by cysteine 380. L-glutamine is bound by residues 381–384, glutamate 403, and arginine 460; that span reads LGLH. Catalysis depends on residues histidine 505 and glutamate 507.

The protein belongs to the CTP synthase family. As to quaternary structure, homotetramer.

The enzyme catalyses UTP + L-glutamine + ATP + H2O = CTP + L-glutamate + ADP + phosphate + 2 H(+). It carries out the reaction L-glutamine + H2O = L-glutamate + NH4(+). It catalyses the reaction UTP + NH4(+) + ATP = CTP + ADP + phosphate + 2 H(+). It functions in the pathway pyrimidine metabolism; CTP biosynthesis via de novo pathway; CTP from UDP: step 2/2. With respect to regulation, allosterically activated by GTP, when glutamine is the substrate; GTP has no effect on the reaction when ammonia is the substrate. The allosteric effector GTP functions by stabilizing the protein conformation that binds the tetrahedral intermediate(s) formed during glutamine hydrolysis. Inhibited by the product CTP, via allosteric rather than competitive inhibition. Functionally, catalyzes the ATP-dependent amination of UTP to CTP with either L-glutamine or ammonia as the source of nitrogen. Regulates intracellular CTP levels through interactions with the four ribonucleotide triphosphates. This chain is CTP synthase, found in Methanosphaera stadtmanae (strain ATCC 43021 / DSM 3091 / JCM 11832 / MCB-3).